Reading from the N-terminus, the 155-residue chain is 6,7-dimethyl-8-ribityllumazine synthase (155 aa).

Residues F23, 57–59, and 81–83 contribute to the 5-amino-6-(D-ribitylamino)uracil site; these read AFE and AVI. 86–87 contacts (2S)-2-hydroxy-3-oxobutyl phosphate; sequence ST. H89 (proton donor) is an active-site residue. A 5-amino-6-(D-ribitylamino)uracil-binding site is contributed by F114. R128 provides a ligand contact to (2S)-2-hydroxy-3-oxobutyl phosphate.

The protein belongs to the DMRL synthase family.

It catalyses the reaction (2S)-2-hydroxy-3-oxobutyl phosphate + 5-amino-6-(D-ribitylamino)uracil = 6,7-dimethyl-8-(1-D-ribityl)lumazine + phosphate + 2 H2O + H(+). Its pathway is cofactor biosynthesis; riboflavin biosynthesis; riboflavin from 2-hydroxy-3-oxobutyl phosphate and 5-amino-6-(D-ribitylamino)uracil: step 1/2. In terms of biological role, catalyzes the formation of 6,7-dimethyl-8-ribityllumazine by condensation of 5-amino-6-(D-ribitylamino)uracil with 3,4-dihydroxy-2-butanone 4-phosphate. This is the penultimate step in the biosynthesis of riboflavin. The chain is 6,7-dimethyl-8-ribityllumazine synthase from Citrifermentans bemidjiense (strain ATCC BAA-1014 / DSM 16622 / JCM 12645 / Bem) (Geobacter bemidjiensis).